The sequence spans 249 residues: Diaminopimelate epimerase (249 aa).

The substrate site is built by asparagine 11 and asparagine 60. The active-site Proton donor is cysteine 69. Residues 70-71, asparagine 164, and 182-183 contribute to the substrate site; these read GN and ER. Cysteine 192 acts as the Proton acceptor in catalysis. 193 to 194 is a binding site for substrate; the sequence is GT.

The protein belongs to the diaminopimelate epimerase family. Homodimer.

Its subcellular location is the cytoplasm. The enzyme catalyses (2S,6S)-2,6-diaminopimelate = meso-2,6-diaminopimelate. It functions in the pathway amino-acid biosynthesis; L-lysine biosynthesis via DAP pathway; DL-2,6-diaminopimelate from LL-2,6-diaminopimelate: step 1/1. Catalyzes the stereoinversion of LL-2,6-diaminopimelate (L,L-DAP) to meso-diaminopimelate (meso-DAP), a precursor of L-lysine and an essential component of the bacterial peptidoglycan. The protein is Diaminopimelate epimerase of Campylobacter jejuni subsp. jejuni serotype O:6 (strain 81116 / NCTC 11828).